The following is a 947-amino-acid chain: Glutamate receptor 2.8 (947 aa).

The first 26 residues, 1–26 (MNPKKNNNTFLSYFVCLFLLLEVGLG), serve as a signal peptide directing secretion. Over 27–577 (QNQISEIKVG…NTWVFLKPWG (551 aa)) the chain is Extracellular. N42, N118, N333, N341, N348, N420, N478, and N524 each carry an N-linked (GlcNAc...) asparagine glycan. Residues 578–598 (LDLWVTTACFFVLIGFVVWLF) form a helical membrane-spanning segment. Residues 599–607 (EHRVNTDFR) are Cytoplasmic-facing. Residues 608-628 (GPPHHQIGTSFWFSFSTMVFA) traverse the membrane as a helical segment. Residues 629–632 (HREK) lie on the Cytoplasmic side of the membrane. The chain crosses the membrane as a helical span at residues 633 to 653 (VVSNLARFVVVVWCFVVLVLT). Over 654 to 819 (QSYTANLTSF…NRLSLRSFWG (166 aa)) the chain is Extracellular. N-linked (GlcNAc...) asparagine glycosylation is found at N659, N704, N723, and N779. A helical membrane pass occupies residues 820–840 (LFLIAGIASFLALLIFVFLFL). Topologically, residues 841–947 (YENRHTLCDD…ESDIECVVEQ (107 aa)) are cytoplasmic.

The protein belongs to the glutamate-gated ion channel (TC 1.A.10.1) family. In terms of assembly, may form heteromers. Expressed predominantly in leaves.

The protein resides in the membrane. In terms of biological role, glutamate-gated receptor that probably acts as a non-selective cation channel. May be involved in light-signal transduction and calcium homeostasis via the regulation of calcium influx into cells. This chain is Glutamate receptor 2.8 (GLR2.8), found in Arabidopsis thaliana (Mouse-ear cress).